A 309-amino-acid chain; its full sequence is Homoserine O-succinyltransferase (309 aa).

Residue cysteine 142 is the Acyl-thioester intermediate of the active site. Substrate contacts are provided by lysine 163 and serine 192. Histidine 235 acts as the Proton acceptor in catalysis. Glutamate 237 is a catalytic residue. Residue arginine 249 coordinates substrate.

Belongs to the MetA family.

The protein resides in the cytoplasm. It catalyses the reaction L-homoserine + succinyl-CoA = O-succinyl-L-homoserine + CoA. It participates in amino-acid biosynthesis; L-methionine biosynthesis via de novo pathway; O-succinyl-L-homoserine from L-homoserine: step 1/1. Functionally, transfers a succinyl group from succinyl-CoA to L-homoserine, forming succinyl-L-homoserine. This chain is Homoserine O-succinyltransferase, found in Klebsiella pneumoniae (strain 342).